The sequence spans 177 residues: PLAC8-like protein 1 (177 aa).

It belongs to the cornifelin family.

The protein is PLAC8-like protein 1 (PLAC8L1) of Homo sapiens (Human).